Here is a 447-residue protein sequence, read N- to C-terminus: Alpha-1,3-mannosyl-glycoprotein 2-beta-N-acetylglucosaminyltransferase (447 aa).

Over 1-6 (MLKKQT) the chain is Cytoplasmic. The helical; Signal-anchor for type II membrane protein transmembrane segment at 7–29 (AGLVLWGAIIFVGWNALLLLFFW) threads the bilayer. Residues 30-447 (TRPAPGRLPS…TWTGYDPSWN (418 aa)) lie on the Lumenal side of the membrane. Cysteine 115 and cysteine 145 are joined by a disulfide. Positions 117, 144, 190, and 212 each coordinate substrate. Aspartate 213 is a Mn(2+) binding site. Residues cysteine 239 and cysteine 305 are joined by a disulfide bond. Catalysis depends on aspartate 291, which acts as the Proton acceptor. Position 322 (serine 322) interacts with substrate.

It belongs to the glycosyltransferase 13 family. As to quaternary structure, interacts with MGAT4D. Interacts with BRI3. The cofactor is Mn(2+). In terms of tissue distribution, detected in kidney, liver and brain.

The protein resides in the golgi apparatus membrane. It is found in the cytoplasm. It localises to the perinuclear region. The catalysed reaction is N(4)-(alpha-D-Man-(1-&gt;3)-[alpha-D-Man-(1-&gt;3)-[alpha-D-Man-(1-&gt;6)]-alpha-D-Man-(1-&gt;6)]-beta-D-Man-(1-&gt;4)-beta-D-GlcNAc-(1-&gt;4)-beta-D-GlcNAc)-L-asparaginyl-[protein] (N-glucan mannose isomer 5A1,2) + UDP-N-acetyl-alpha-D-glucosamine = N(4)-{beta-D-GlcNAc-(1-&gt;2)-alpha-D-Man-(1-&gt;3)-[alpha-D-Man-(1-&gt;3)-[alpha-D-Man-(1-&gt;6)]-alpha-D-Man-(1-&gt;6)]-beta-D-Man-(1-&gt;4)-beta-D-GlcNAc-(1-&gt;4)-beta-D-GlcNAc}-L-asparaginyl-[protein] + UDP + H(+). It functions in the pathway protein modification; protein glycosylation. Its function is as follows. Initiates complex N-linked carbohydrate formation. Essential for the conversion of high-mannose to hybrid and complex N-glycans. The chain is Alpha-1,3-mannosyl-glycoprotein 2-beta-N-acetylglucosaminyltransferase (Mgat1) from Mus musculus (Mouse).